A 341-amino-acid polypeptide reads, in one-letter code: tRNA N6-adenosine threonylcarbamoyltransferase (341 aa).

2 residues coordinate Fe cation: His-119 and His-123. Substrate-binding positions include 141–145, Asp-174, Gly-187, and Asn-279; that span reads MVSGG. Asp-307 serves as a coordination point for Fe cation.

This sequence belongs to the KAE1 / TsaD family. Fe(2+) serves as cofactor.

Its subcellular location is the cytoplasm. The catalysed reaction is L-threonylcarbamoyladenylate + adenosine(37) in tRNA = N(6)-L-threonylcarbamoyladenosine(37) in tRNA + AMP + H(+). In terms of biological role, required for the formation of a threonylcarbamoyl group on adenosine at position 37 (t(6)A37) in tRNAs that read codons beginning with adenine. Is involved in the transfer of the threonylcarbamoyl moiety of threonylcarbamoyl-AMP (TC-AMP) to the N6 group of A37, together with TsaE and TsaB. TsaD likely plays a direct catalytic role in this reaction. This Oenococcus oeni (strain ATCC BAA-331 / PSU-1) protein is tRNA N6-adenosine threonylcarbamoyltransferase.